Consider the following 500-residue polypeptide: NAD(P)H-quinone oxidoreductase chain 4, chloroplastic (500 aa).

Helical transmembrane passes span F4 to L24, Y35 to F55, I87 to V107, F113 to S130, L134 to M154, F167 to L187, I211 to H231, H242 to V262, A272 to A292, I305 to D325, G330 to G350, L386 to T406, I416 to M436, and L462 to V482.

The protein belongs to the complex I subunit 4 family.

It is found in the plastid. It localises to the chloroplast thylakoid membrane. It carries out the reaction a plastoquinone + NADH + (n+1) H(+)(in) = a plastoquinol + NAD(+) + n H(+)(out). It catalyses the reaction a plastoquinone + NADPH + (n+1) H(+)(in) = a plastoquinol + NADP(+) + n H(+)(out). This chain is NAD(P)H-quinone oxidoreductase chain 4, chloroplastic, found in Arabis hirsuta (Hairy rock-cress).